The following is a 536-amino-acid chain: ADP,ATP carrier protein 4 (536 aa).

9 consecutive transmembrane segments (helical) span residues 44-64 (VLLF…LYVL), 77-97 (SILF…IVIV), 109-129 (MLEV…FVIW), 172-194 (TMLY…FSRA), 205-225 (KFLP…GLLT), 244-264 (FSQV…TSFF), 309-329 (VVAA…GIVL), 349-369 (AQII…THLI), and 378-398 (AITA…MVFF). N-linked (GlcNAc...) asparagine glycosylation is found at asparagine 400 and asparagine 421. 2 helical membrane-spanning segments follow: residues 465-485 (LGIN…TVVF) and 493-513 (VVSV…RSIL).

The protein belongs to the ADP/ATP translocase tlc family.

It localises to the cell membrane. Its function is as follows. ATP transporter involved in the uptake of ATP from the host cell cytoplasm. Provides the microsporidian cell with host ATP in exchange for ADP. This is an obligate exchange system. This energy acquiring activity is an important component of microsporidian parasitism. The sequence is that of ADP,ATP carrier protein 4 (NTT4) from Encephalitozoon cuniculi (strain GB-M1) (Microsporidian parasite).